Reading from the N-terminus, the 617-residue chain is BTB/POZ domain-containing protein At3g08570 (617 aa).

The region spanning glycine 36–isoleucine 106 is the BTB domain. The NPH3 domain maps to glutamate 210–arginine 490. Tyrosine 431 is subject to Phosphotyrosine. Disordered regions lie at residues leucine 505 to tyrosine 525 and glycine 585 to phenylalanine 617. The span at serine 602–phenylalanine 617 shows a compositional bias: basic and acidic residues.

Belongs to the NPH3 family.

Its pathway is protein modification; protein ubiquitination. May act as a substrate-specific adapter of an E3 ubiquitin-protein ligase complex (CUL3-RBX1-BTB) which mediates the ubiquitination and subsequent proteasomal degradation of target proteins. The protein is BTB/POZ domain-containing protein At3g08570 of Arabidopsis thaliana (Mouse-ear cress).